A 175-amino-acid chain; its full sequence is uncharacterized protein (175 aa).

Residues 1-10 are compositionally biased toward polar residues; the sequence is MSKKINNNKT. The disordered stretch occupies residues 1 to 21; the sequence is MSKKINNNKTPRNKVKNNNVS.

This is an uncharacterized protein from Ureaplasma parvum serovar 3 (strain ATCC 700970).